A 60-amino-acid polypeptide reads, in one-letter code: Large ribosomal subunit protein uL30 (60 aa).

Belongs to the universal ribosomal protein uL30 family. Part of the 50S ribosomal subunit.

The sequence is that of Large ribosomal subunit protein uL30 from Salinispora tropica (strain ATCC BAA-916 / DSM 44818 / JCM 13857 / NBRC 105044 / CNB-440).